The following is a 386-amino-acid chain: Cysteine protease Amb a 11.0101 (386 aa).

Residues 1–22 form the signal peptide; it reads MEINKLVCFSFSLVLILGLVES. The tract at residues 6–20 is T-cell epitope. MHC class II peptide able to activate CD(4+) T cells of the ragweed pollen-allergic patients indicated by significantly increased IL-2 production compared to non-allergic individuals. Not recognized by IgE of the patients allergic to ragweed pollen; sequence LVCFSFSLVLILGLV. Positions 23 to 108 are cleaved as a propeptide — activation peptide; that stretch reads FHYHERELES…SKISHFQALR (86 aa). Asparagine 127 is a glycosylation site (N-linked (GlcNAc...) (complex) asparagine). 3 disulfides stabilise this stretch: cysteine 152–cysteine 193, cysteine 186–cysteine 226, and cysteine 283–cysteine 334. Cysteine 155 is an active-site residue. The tract at residues 173 to 186 is B-cell epitope. Binds to IgE of the patients allergic to ragweed pollen; the sequence is GKLVKFSEQQLVDC. Residues histidine 289 and asparagine 310 contribute to the active site. Residues 340-377 form a disordered region; sequence SSFPIMNDPNPPKDDPNGPKDDPDAPKDPKFKTTQRLQ. A compositionally biased stretch (basic and acidic residues) spans 350–370; that stretch reads PPKDDPNGPKDDPDAPKDPKF. A propeptide spans 371 to 386 (removed in mature form); the sequence is KTTQRLQGIRTKLLEL.

The protein belongs to the peptidase C1 family. In terms of assembly, homodimer. Autocatalytic proteolytic cleavage of N-terminal activation peptide. Post-translationally, N-glycosylated. Glycosylation is not required for binding to IgE. As to expression, expressed in pollen (at protein and mRNA level).

With respect to regulation, activated by L-cysteine. Inhibited by cysteine protease inhibitor E64 (L-trans-epoxysuccinyl-leucylamide-(4-guanido)-butane). Inhibited by cysteine/serine protease inhibitor leupeptin. Not inhibited by serine protease inhibitors 4-(2-aminoethyl)benzenesulfonyl fluoride hydrochloride (AEBSF) and phenylmethanesulfonyl fluoride (PMSF), metallo protease inhibitor bestatin or aspartic protease inhibitor pepstatin A. Its function is as follows. Cysteine protease. Hydrolyzes casein and synthetic peptide Boc-Val-Leu-Lys-7-amino-4-methylcoumarin (Boc-VLK-AMC) in vitro. This Ambrosia artemisiifolia (Common ragweed) protein is Cysteine protease Amb a 11.0101.